The chain runs to 186 residues: Adenine phosphoribosyltransferase (186 aa).

It belongs to the purine/pyrimidine phosphoribosyltransferase family. In terms of assembly, homodimer.

The protein localises to the cytoplasm. It carries out the reaction AMP + diphosphate = 5-phospho-alpha-D-ribose 1-diphosphate + adenine. Its pathway is purine metabolism; AMP biosynthesis via salvage pathway; AMP from adenine: step 1/1. Functionally, catalyzes a salvage reaction resulting in the formation of AMP, that is energically less costly than de novo synthesis. The polypeptide is Adenine phosphoribosyltransferase (Xanthomonas euvesicatoria pv. vesicatoria (strain 85-10) (Xanthomonas campestris pv. vesicatoria)).